The primary structure comprises 267 residues: Small ribosomal subunit protein uS2c (267 aa).

The segment at Lys237 to Ile267 is disordered. Over residues Asn250–Ile267 the composition is skewed to polar residues.

This sequence belongs to the universal ribosomal protein uS2 family.

It localises to the plastid. It is found in the chloroplast. This chain is Small ribosomal subunit protein uS2c (rps2), found in Chlorella vulgaris (Green alga).